The following is a 411-amino-acid chain: Indian hedgehog protein (411 aa).

The signal sequence occupies residues 1-27; that stretch reads MSPARLRPRLHFCLVLLLLLVVPAAWG. C28 carries N-palmitoyl cysteine lipidation. The Ca(2+) site is built by E94, E95, D100, T130, E131, D134, and D136. H145, D152, and H187 together coordinate Zn(2+). The Cholesterol glycine ester moiety is linked to residue G202. N-linked (GlcNAc...) asparagine glycosylation is present at N282.

It belongs to the hedgehog family. As to quaternary structure, multimer. In terms of assembly, interacts with BOC and CDON. Interacts with PTCH1. Interacts with glypican GPC3. In terms of processing, cholesterylation is required for N-product targeting to lipid rafts and multimerization. Post-translationally, the C-terminal domain displays an autoproteolysis activity and a cholesterol transferase activity. Both activities result in the cleavage of the full-length protein and covalent attachment of a cholesterol moiety to the C-terminal of the newly generated N-product. The N-product is the active species in both local and long-range signaling, whereas the C-product is degraded in the endoplasmic reticulum. N-palmitoylation by HHAT of N-product is required for indian hedgehog protein N-product multimerization and full activity. Expressed in embryonic lung, and in adult kidney and liver.

The protein localises to the cell membrane. It localises to the endoplasmic reticulum membrane. It is found in the golgi apparatus membrane. Its subcellular location is the secreted. It carries out the reaction glycyl-L-cysteinyl-[protein] + cholesterol + H(+) = [protein]-C-terminal glycyl cholesterol ester + N-terminal L-cysteinyl-[protein]. Its function is as follows. Plays a role in embryonic morphogenesis; it is involved in the regulation of endochondral skeleton formation, and the development of retinal pigment epithelium (RPE), photoreceptors and periocular tissues. In terms of biological role, the C-terminal part of the indian hedgehog protein precursor displays an autoproteolysis and a cholesterol transferase activity. Both activities result in the cleavage of the full-length protein into two parts followed by the covalent attachment of a cholesterol moiety to the C-terminal of the newly generated N-product. Both activities occur in the endoplasmic reticulum. Plays a role in hedgehog paracrine signaling. Associated with the very-low-density lipoprotein (VLDL) particles to function as a circulating morphogen for endothelial cell integrity maintenance. The dually lipidated indian hedgehog protein N-product is a morphogen which is essential for a variety of patterning events during development. Binds to the patched (PTCH1) receptor, which functions in association with smoothened (SMO), to activate the transcription of target genes. Plays a role in morphogenesis of the skeleton by coordinating growth and differentiation of the endochondral skeleton. Positively regulates PTHLH expression during endochondral bone formation preventing chondrocyte hypertrophy. In contrast, participates in normal chondrocyte proliferation in a PTHLH-independent pathway. In Homo sapiens (Human), this protein is Indian hedgehog protein.